The chain runs to 212 residues: Pyridoxine/pyridoxamine 5'-phosphate oxidase (212 aa).

Substrate-binding positions include 8–11 (RKNY) and Lys-66. FMN-binding positions include 61 to 66 (RIVLIK), 76 to 77 (FT), Arg-82, Lys-83, and Gln-105. 3 residues coordinate substrate: Tyr-123, Arg-127, and Ser-131. FMN contacts are provided by residues 140 to 141 (QS) and Trp-184. 190 to 192 (RLH) serves as a coordination point for substrate. Position 194 (Arg-194) interacts with FMN.

It belongs to the pyridoxamine 5'-phosphate oxidase family. Homodimer. Requires FMN as cofactor.

It catalyses the reaction pyridoxamine 5'-phosphate + O2 + H2O = pyridoxal 5'-phosphate + H2O2 + NH4(+). It carries out the reaction pyridoxine 5'-phosphate + O2 = pyridoxal 5'-phosphate + H2O2. Its pathway is cofactor metabolism; pyridoxal 5'-phosphate salvage; pyridoxal 5'-phosphate from pyridoxamine 5'-phosphate: step 1/1. It functions in the pathway cofactor metabolism; pyridoxal 5'-phosphate salvage; pyridoxal 5'-phosphate from pyridoxine 5'-phosphate: step 1/1. Its function is as follows. Catalyzes the oxidation of either pyridoxine 5'-phosphate (PNP) or pyridoxamine 5'-phosphate (PMP) into pyridoxal 5'-phosphate (PLP). In Paraburkholderia phymatum (strain DSM 17167 / CIP 108236 / LMG 21445 / STM815) (Burkholderia phymatum), this protein is Pyridoxine/pyridoxamine 5'-phosphate oxidase.